The sequence spans 246 residues: UDP-N-acetyl-D-mannosaminuronic acid transferase (246 aa).

Belongs to the glycosyltransferase 26 family.

The catalysed reaction is UDP-N-acetyl-alpha-D-mannosaminouronate + N-acetyl-alpha-D-glucosaminyl-di-trans,octa-cis-undecaprenyl diphosphate = beta-D-ManNAcA-(1-&gt;4)-alpha-D-GlcNAc-di-trans,octa-cis-undecaprenyl diphosphate + UDP + H(+). It functions in the pathway bacterial outer membrane biogenesis; enterobacterial common antigen biosynthesis. Catalyzes the synthesis of Und-PP-GlcNAc-ManNAcA (Lipid II), the second lipid-linked intermediate involved in enterobacterial common antigen (ECA) synthesis. The protein is UDP-N-acetyl-D-mannosaminuronic acid transferase of Salmonella agona (strain SL483).